Consider the following 253-residue polypeptide: Tryptophan synthase alpha chain (253 aa).

Active-site proton acceptor residues include E47 and D58.

Belongs to the TrpA family. In terms of assembly, tetramer of two alpha and two beta chains.

It carries out the reaction (1S,2R)-1-C-(indol-3-yl)glycerol 3-phosphate + L-serine = D-glyceraldehyde 3-phosphate + L-tryptophan + H2O. It functions in the pathway amino-acid biosynthesis; L-tryptophan biosynthesis; L-tryptophan from chorismate: step 5/5. Its function is as follows. The alpha subunit is responsible for the aldol cleavage of indoleglycerol phosphate to indole and glyceraldehyde 3-phosphate. The polypeptide is Tryptophan synthase alpha chain (Lactococcus lactis subsp. cremoris (strain MG1363)).